The sequence spans 205 residues: Dephospho-CoA kinase (205 aa).

The region spanning arginine 6–arginine 205 is the DPCK domain. Alanine 14–threonine 19 contacts ATP.

This sequence belongs to the CoaE family.

It is found in the cytoplasm. The enzyme catalyses 3'-dephospho-CoA + ATP = ADP + CoA + H(+). It participates in cofactor biosynthesis; coenzyme A biosynthesis; CoA from (R)-pantothenate: step 5/5. Its function is as follows. Catalyzes the phosphorylation of the 3'-hydroxyl group of dephosphocoenzyme A to form coenzyme A. This chain is Dephospho-CoA kinase, found in Bifidobacterium longum (strain NCC 2705).